The chain runs to 803 residues: Volume-regulated anion channel subunit LRRC8C (803 aa).

Residues 1 to 22 (MIPVTEFRQFSEQQPAFRVLKP) lie on the Cytoplasmic side of the membrane. A helical membrane pass occupies residues 23 to 47 (WWDVFTDYLSVAMLMIGVFGCTLQV). The Extracellular portion of the chain corresponds to 48–124 (MQDKIICLPK…CYERALHWYA (77 aa)). 2 disulfide bridges follow: Cys-54-Cys-308 and Cys-115-Cys-293. Residues Asn-64 and Asn-70 are each glycosylated (N-linked (GlcNAc...) asparagine). A helical transmembrane segment spans residues 125–144 (KYFPYLVLIHTLVFMLCSNF). Topologically, residues 145–262 (WFKFPGSSSK…EEGDILYAMY (118 aa)) are cytoplasmic. The interval 177-209 (EVSGEDSEEKDNRKNNMNRSNTIQSGPEDSLVN) is disordered. The span at 191 to 209 (NNMNRSNTIQSGPEDSLVN) shows a compositional bias: polar residues. Residues Ser-212 and Ser-215 each carry the phosphoserine modification. The chain crosses the membrane as a helical span at residues 263–284 (VRQTVLKVIKFLIIIAYNSALV). At 285-314 (SKVQFTVDCNVDIQDMTGYKNFSCNHTMAH) the chain is on the extracellular side. The helical transmembrane segment at 315 to 339 (LFSKLSFCYLCFVSIYGLTCLYTLY) threads the bilayer. At 340-803 (WLFYRSLREY…SDVREQMKTE (464 aa)) the chain is on the cytoplasmic side. LRR repeat units follow at residues 397 to 420 (ENKLKQLNLNNEWTPDKLRQKLQT), 421 to 443 (NAHNRLELPLIMLSGLPDTVFEI), 446 to 466 (LQSLKLEIIKNVMIPATIAQL), 467 to 488 (DNLQELSLHQCSVKIHSAALSF), 490 to 513 (KENLKVLSVKFDDMRELPPWMYGL), 515 to 537 (NLEELYLVGSLSHDISRNVTLES), 541 to 563 (LKSLKILSIKSNVSKIPQAVVDV), 565 to 587 (SHLQKMCIHNDGTKLVMLNNLKK), 588 to 611 (MTNLTELELVHCDLERIPHAVFSL), 613 to 635 (SLQELDLKENNLKSIEEIVSFQH), 636 to 659 (LRKLTVLKLWHNSITYIPEHIKKL), 660 to 682 (TSLERLSFSHNKIEVLPSHLFLC), 684 to 705 (KIRYLDLSYNDIRFIPPEIGVL), 706 to 728 (QSLQYFSITCNKVESLPDELYFC), 730 to 751 (KLKTLKIGKNSLSVLSPKIGNL), 753 to 774 (FLSYLDVKGNHFEILPPELGDC), and 776 to 799 (ALKRAGLVVEDALFETLPSDVREQ).

Belongs to the LRRC8 family. As to quaternary structure, heterohexamer; oligomerizes with other LRRC8 proteins (LRRC8A, LRRC8B, LRRC8D and/or LRRC8E) to form a heterohexamer. Homoheptamer; inactive, likely because it is not targeted to the plasma membrane in the absence of LRRC8A. In vivo, the subunit composition may depend primarily on expression levels, and heterooligomeric channels containing various proportions of the different LRRC8 proteins may coexist. Expressed at highest levels in skeletal muscle, and at moderate levels in heart, lung and peripheral blood leukocytes.

Its subcellular location is the cell membrane. The protein localises to the endoplasmic reticulum membrane. It catalyses the reaction chloride(in) = chloride(out). The catalysed reaction is iodide(out) = iodide(in). The enzyme catalyses taurine(out) = taurine(in). It carries out the reaction 2',3'-cGAMP(out) = 2',3'-cGAMP(in). In terms of biological role, non-essential component of the volume-regulated anion channel (VRAC, also named VSOAC channel), an anion channel required to maintain a constant cell volume in response to extracellular or intracellular osmotic changes. The VRAC channel conducts iodide better than chloride and can also conduct organic osmolytes like taurine. Plays a redundant role in the efflux of amino acids, such as aspartate and glutamate, in response to osmotic stress. The VRAC channel also mediates transport of immunoreactive cyclic dinucleotide GMP-AMP (2'-3'-cGAMP), an immune messenger produced in response to DNA virus in the cytosol. Channel activity requires LRRC8A plus at least one other family member (LRRC8B, LRRC8C, LRRC8D or LRRC8E); channel characteristics depend on the precise subunit composition. In Homo sapiens (Human), this protein is Volume-regulated anion channel subunit LRRC8C.